A 306-amino-acid polypeptide reads, in one-letter code: Aspartate carbamoyltransferase catalytic subunit (306 aa).

Positions 55 and 56 each coordinate carbamoyl phosphate. Lys84 provides a ligand contact to L-aspartate. 3 residues coordinate carbamoyl phosphate: Arg105, His133, and Gln136. Residues Arg166 and Arg227 each coordinate L-aspartate. Leu265 and Pro266 together coordinate carbamoyl phosphate.

The protein belongs to the aspartate/ornithine carbamoyltransferase superfamily. ATCase family. Heterododecamer (2C3:3R2) of six catalytic PyrB chains organized as two trimers (C3), and six regulatory PyrI chains organized as three dimers (R2).

It catalyses the reaction carbamoyl phosphate + L-aspartate = N-carbamoyl-L-aspartate + phosphate + H(+). The protein operates within pyrimidine metabolism; UMP biosynthesis via de novo pathway; (S)-dihydroorotate from bicarbonate: step 2/3. In terms of biological role, catalyzes the condensation of carbamoyl phosphate and aspartate to form carbamoyl aspartate and inorganic phosphate, the committed step in the de novo pyrimidine nucleotide biosynthesis pathway. This Neisseria meningitidis serogroup A / serotype 4A (strain DSM 15465 / Z2491) protein is Aspartate carbamoyltransferase catalytic subunit.